The following is a 141-amino-acid chain: Small ribosomal subunit protein bS6 (141 aa).

The segment at 96–141 is disordered; sequence VTGPSEMLKAEENRSERRERRERPEHADGAEGDDSNDSDNSDNADE. Residues 103–124 show a composition bias toward basic and acidic residues; sequence LKAEENRSERRERRERPEHADG. Acidic residues predominate over residues 125–141; sequence AEGDDSNDSDNSDNADE.

It belongs to the bacterial ribosomal protein bS6 family.

Its function is as follows. Binds together with bS18 to 16S ribosomal RNA. This is Small ribosomal subunit protein bS6 from Pseudomonas entomophila (strain L48).